Reading from the N-terminus, the 191-residue chain is dCTP deaminase (191 aa).

Residues 112 to 117 (KSTYAR), 136 to 138 (TLE), Gln-157, Tyr-173, and Gln-183 contribute to the dCTP site. The active-site Proton donor/acceptor is the Glu-138.

It belongs to the dCTP deaminase family. Homotrimer.

The catalysed reaction is dCTP + H2O + H(+) = dUTP + NH4(+). Its pathway is pyrimidine metabolism; dUMP biosynthesis; dUMP from dCTP (dUTP route): step 1/2. Its function is as follows. Catalyzes the deamination of dCTP to dUTP. The protein is dCTP deaminase of Psychrobacter cryohalolentis (strain ATCC BAA-1226 / DSM 17306 / VKM B-2378 / K5).